A 155-amino-acid polypeptide reads, in one-letter code: SsrA-binding protein (155 aa).

Belongs to the SmpB family.

Its subcellular location is the cytoplasm. Required for rescue of stalled ribosomes mediated by trans-translation. Binds to transfer-messenger RNA (tmRNA), required for stable association of tmRNA with ribosomes. tmRNA and SmpB together mimic tRNA shape, replacing the anticodon stem-loop with SmpB. tmRNA is encoded by the ssrA gene; the 2 termini fold to resemble tRNA(Ala) and it encodes a 'tag peptide', a short internal open reading frame. During trans-translation Ala-aminoacylated tmRNA acts like a tRNA, entering the A-site of stalled ribosomes, displacing the stalled mRNA. The ribosome then switches to translate the ORF on the tmRNA; the nascent peptide is terminated with the 'tag peptide' encoded by the tmRNA and targeted for degradation. The ribosome is freed to recommence translation, which seems to be the essential function of trans-translation. This chain is SsrA-binding protein, found in Gloeothece citriformis (strain PCC 7424) (Cyanothece sp. (strain PCC 7424)).